The sequence spans 217 residues: FMN-dependent NADH:quinone oxidoreductase (217 aa).

FMN-binding positions include S10, 17–19 (SAS), and 137–140 (SRGG).

It belongs to the azoreductase type 1 family. As to quaternary structure, homodimer. Requires FMN as cofactor.

The enzyme catalyses 2 a quinone + NADH + H(+) = 2 a 1,4-benzosemiquinone + NAD(+). It catalyses the reaction N,N-dimethyl-1,4-phenylenediamine + anthranilate + 2 NAD(+) = 2-(4-dimethylaminophenyl)diazenylbenzoate + 2 NADH + 2 H(+). Its function is as follows. Quinone reductase that provides resistance to thiol-specific stress caused by electrophilic quinones. Also exhibits azoreductase activity. Catalyzes the reductive cleavage of the azo bond in aromatic azo compounds to the corresponding amines. The polypeptide is FMN-dependent NADH:quinone oxidoreductase (Streptomyces avermitilis (strain ATCC 31267 / DSM 46492 / JCM 5070 / NBRC 14893 / NCIMB 12804 / NRRL 8165 / MA-4680)).